The sequence spans 104 residues: L-rhamnose mutarotase (104 aa).

Residue tyrosine 18 participates in substrate binding. Histidine 22 acts as the Proton donor in catalysis. Residues tyrosine 41 and 76–77 contribute to the substrate site; that span reads WW.

It belongs to the rhamnose mutarotase family. As to quaternary structure, homodimer.

It localises to the cytoplasm. The catalysed reaction is alpha-L-rhamnose = beta-L-rhamnose. It functions in the pathway carbohydrate metabolism; L-rhamnose metabolism. Involved in the anomeric conversion of L-rhamnose. This Escherichia coli O1:K1 / APEC protein is L-rhamnose mutarotase.